The following is a 258-amino-acid chain: GTP cyclohydrolase FolE2 (258 aa).

Belongs to the GTP cyclohydrolase IV family.

It carries out the reaction GTP + H2O = 7,8-dihydroneopterin 3'-triphosphate + formate + H(+). It participates in cofactor biosynthesis; 7,8-dihydroneopterin triphosphate biosynthesis; 7,8-dihydroneopterin triphosphate from GTP: step 1/1. Functionally, converts GTP to 7,8-dihydroneopterin triphosphate. The sequence is that of GTP cyclohydrolase FolE2 from Lawsonia intracellularis (strain PHE/MN1-00).